A 97-amino-acid polypeptide reads, in one-letter code: Aspartyl/glutamyl-tRNA(Asn/Gln) amidotransferase subunit C (97 aa).

It belongs to the GatC family. As to quaternary structure, heterotrimer of A, B and C subunits.

It carries out the reaction L-glutamyl-tRNA(Gln) + L-glutamine + ATP + H2O = L-glutaminyl-tRNA(Gln) + L-glutamate + ADP + phosphate + H(+). The enzyme catalyses L-aspartyl-tRNA(Asn) + L-glutamine + ATP + H2O = L-asparaginyl-tRNA(Asn) + L-glutamate + ADP + phosphate + 2 H(+). Allows the formation of correctly charged Asn-tRNA(Asn) or Gln-tRNA(Gln) through the transamidation of misacylated Asp-tRNA(Asn) or Glu-tRNA(Gln) in organisms which lack either or both of asparaginyl-tRNA or glutaminyl-tRNA synthetases. The reaction takes place in the presence of glutamine and ATP through an activated phospho-Asp-tRNA(Asn) or phospho-Glu-tRNA(Gln). The chain is Aspartyl/glutamyl-tRNA(Asn/Gln) amidotransferase subunit C from Synechococcus sp. (strain CC9605).